Reading from the N-terminus, the 362-residue chain is 3-dehydroquinate synthase (362 aa).

Residues 71–76 (DGEKYK), 105–109 (GVIGD), 129–130 (TT), lysine 142, and lysine 151 each bind NAD(+). Zn(2+) contacts are provided by glutamate 184, histidine 248, and histidine 265.

This sequence belongs to the sugar phosphate cyclases superfamily. Dehydroquinate synthase family. Co(2+) serves as cofactor. Zn(2+) is required as a cofactor. Requires NAD(+) as cofactor.

The protein resides in the cytoplasm. The enzyme catalyses 7-phospho-2-dehydro-3-deoxy-D-arabino-heptonate = 3-dehydroquinate + phosphate. Its pathway is metabolic intermediate biosynthesis; chorismate biosynthesis; chorismate from D-erythrose 4-phosphate and phosphoenolpyruvate: step 2/7. Catalyzes the conversion of 3-deoxy-D-arabino-heptulosonate 7-phosphate (DAHP) to dehydroquinate (DHQ). This chain is 3-dehydroquinate synthase, found in Hamiltonella defensa subsp. Acyrthosiphon pisum (strain 5AT).